Here is a 268-residue protein sequence, read N- to C-terminus: Activator of basal transcription 1 (268 aa).

A coiled-coil region spans residues Lys6 to Asn38. The region spanning Gly47–Leu144 is the RRM domain. A coiled-coil region spans residues Ala163–Gln193. A disordered region spans residues Ala200–Gln242. Positions Arg206–Pro217 are enriched in polar residues.

This sequence belongs to the ESF2/ABP1 family. In terms of assembly, interacts with IGHMBP2. Interacts with ESF1/ABTAP.

The protein localises to the nucleus. It is found in the nucleolus. Its function is as follows. May be a novel TATA-binding protein (TBP) which can function as a basal transcription activator. Can act as a regulator of basal transcription for class II genes. The protein is Activator of basal transcription 1 (Abt1) of Rattus norvegicus (Rat).